We begin with the raw amino-acid sequence, 232 residues long: Large ribosomal subunit protein uL1 (232 aa).

Belongs to the universal ribosomal protein uL1 family. In terms of assembly, part of the 50S ribosomal subunit.

In terms of biological role, binds directly to 23S rRNA. The L1 stalk is quite mobile in the ribosome, and is involved in E site tRNA release. Its function is as follows. Protein L1 is also a translational repressor protein, it controls the translation of the L11 operon by binding to its mRNA. This chain is Large ribosomal subunit protein uL1, found in Dinoroseobacter shibae (strain DSM 16493 / NCIMB 14021 / DFL 12).